The primary structure comprises 279 residues: DegV domain-containing protein lmo1863 (279 aa).

A DegV domain is found at 4 to 278 (IKIITDSTAG…TGAFAFMYYT (275 aa)). Residues serine 62 and serine 94 each contribute to the hexadecanoate site.

Functionally, may bind long-chain fatty acids, such as palmitate, and may play a role in lipid transport or fatty acid metabolism. The polypeptide is DegV domain-containing protein lmo1863 (Listeria monocytogenes serovar 1/2a (strain ATCC BAA-679 / EGD-e)).